The following is a 364-amino-acid chain: UDP-N-acetylglucosamine--N-acetylmuramyl-(pentapeptide) pyrophosphoryl-undecaprenol N-acetylglucosamine transferase (364 aa).

UDP-N-acetyl-alpha-D-glucosamine is bound by residues 19 to 21 (TGG), Asn131, Arg167, Ser195, Ile250, and Gln295.

It belongs to the glycosyltransferase 28 family. MurG subfamily.

Its subcellular location is the cell inner membrane. It catalyses the reaction di-trans,octa-cis-undecaprenyl diphospho-N-acetyl-alpha-D-muramoyl-L-alanyl-D-glutamyl-meso-2,6-diaminopimeloyl-D-alanyl-D-alanine + UDP-N-acetyl-alpha-D-glucosamine = di-trans,octa-cis-undecaprenyl diphospho-[N-acetyl-alpha-D-glucosaminyl-(1-&gt;4)]-N-acetyl-alpha-D-muramoyl-L-alanyl-D-glutamyl-meso-2,6-diaminopimeloyl-D-alanyl-D-alanine + UDP + H(+). It participates in cell wall biogenesis; peptidoglycan biosynthesis. Its function is as follows. Cell wall formation. Catalyzes the transfer of a GlcNAc subunit on undecaprenyl-pyrophosphoryl-MurNAc-pentapeptide (lipid intermediate I) to form undecaprenyl-pyrophosphoryl-MurNAc-(pentapeptide)GlcNAc (lipid intermediate II). In Xylella fastidiosa (strain Temecula1 / ATCC 700964), this protein is UDP-N-acetylglucosamine--N-acetylmuramyl-(pentapeptide) pyrophosphoryl-undecaprenol N-acetylglucosamine transferase.